Here is a 181-residue protein sequence, read N- to C-terminus: ADP-ribosylation factor 1 (181 aa).

The residue at position 2 (glycine 2) is an N-acetylglycine; alternate. Glycine 2 carries the N-myristoyl glycine; alternate lipid modification. Residues 3–16 form an important for the stable binding to the membranes region; sequence NIFANLFKGLFGKK. GTP is bound by residues 24–32, 126–129, and alanine 160; these read GLDAAGKTT and NKQD.

Belongs to the small GTPase superfamily. Arf family. Interacts (when activated) with GGA1, GGA2 and GGA3; the interaction is required for proper subcellular location of GGA1, GGA2 and GGA3. Interacts with ARHGAP21, ASAP2, GGA1, HERC1, PRKCABP, PIP5K1B, TMED2, PSCD2, TMED10 and GRIA2. Interacts with ARFGAP1, which hydrolyzes GTP and thus, regulates its function. Interacts with PI4KB in the Golgi complex. Interacts with NCS1/FREQ in the Golgi and at the plasma membrane. Interacts with PLEKHA3. Interacts with PLEKHA8; the interaction, together with phosphatidylinositol 4-phosphate binding, is required for FAPP2-mediated glucosylceramide transfer activity. Interacts (activated) with PICK1 (via PDZ domain); the interaction blocks Arp2/3 complex inhibition. Interacts with IQSEC1. Interacts with C9orf72.

Its subcellular location is the golgi apparatus membrane. The protein resides in the synapse. It is found in the synaptosome. The protein localises to the postsynaptic density. It catalyses the reaction GTP + H2O = GDP + phosphate + H(+). Alternates between an inactive GDP-bound form and an active GTP-bound form. Activated by guanine nucleotide-exchange factors (GEFs) and inactivated by GTPase-activating proteins (GAPs). Small GTPase involved in protein trafficking between different compartments. Modulates vesicle budding and uncoating within the Golgi complex. In its GTP-bound form, triggers the recruitment of coatomer proteins to the Golgi membrane. The hydrolysis of ARF1-bound GTP, which is mediated by ARFGAPs proteins, is required for dissociation of coat proteins from Golgi membranes and vesicles. The GTP-bound form interacts with PICK1 to limit PICK1-mediated inhibition of Arp2/3 complex activity; the function is linked to AMPA receptor (AMPAR) trafficking, regulation of synaptic plasticity of excitatory synapses and spine shrinkage during long-term depression (LTD). Plays a key role in the regulation of intestinal stem cells and gut microbiota, and is essential for maintaining intestinal homeostasis. Also plays a critical role in mast cell expansion but not in mast cell maturation by facilitating optimal mTORC1 activation. The sequence is that of ADP-ribosylation factor 1 (ARF1) from Bos taurus (Bovine).